Reading from the N-terminus, the 447-residue chain is Asparagine--tRNA ligase (447 aa).

It belongs to the class-II aminoacyl-tRNA synthetase family. As to quaternary structure, homodimer.

Its subcellular location is the cytoplasm. The catalysed reaction is tRNA(Asn) + L-asparagine + ATP = L-asparaginyl-tRNA(Asn) + AMP + diphosphate + H(+). The polypeptide is Asparagine--tRNA ligase (Lactococcus lactis subsp. lactis (strain IL1403) (Streptococcus lactis)).